The chain runs to 636 residues: Chaperone protein DnaK2 (636 aa).

T198 carries the post-translational modification Phosphothreonine; by autocatalysis. Residues 604-618 are compositionally biased toward low complexity; it reads EAGVGAPGAGPEAGT. The tract at residues 604 to 636 is disordered; that stretch reads EAGVGAPGAGPEAGTSSGGGDDVIDAEFSEPEK. Acidic residues predominate over residues 625-636; it reads DVIDAEFSEPEK.

Belongs to the heat shock protein 70 family.

Functionally, acts as a chaperone. This Synechocystis sp. (strain ATCC 27184 / PCC 6803 / Kazusa) protein is Chaperone protein DnaK2 (dnaK2).